A 132-amino-acid chain; its full sequence is Large ribosomal subunit protein uL14 (132 aa).

The protein belongs to the universal ribosomal protein uL14 family. As to quaternary structure, part of the 50S ribosomal subunit. Forms a cluster with proteins L3 and L24e, part of which may contact the 16S rRNA in 2 intersubunit bridges.

Functionally, binds to 23S rRNA. Forms part of two intersubunit bridges in the 70S ribosome. The protein is Large ribosomal subunit protein uL14 of Methanococcus maripaludis (strain C5 / ATCC BAA-1333).